Reading from the N-terminus, the 380-residue chain is Protein FAM110B (380 aa).

Residues 92–272 form a disordered region; the sequence is ALGSPTLKGF…RPSLQRSKSD (181 aa). A compositionally biased stretch (gly residues) spans 100 to 110; that stretch reads GFGGGGGGAKS. The span at 127 to 138 shows a compositional bias: polar residues; sequence ILNSSEGSSTGS. The span at 153 to 162 shows a compositional bias: basic and acidic residues; the sequence is DAAELHRHSF. Low complexity predominate over residues 239–248; that stretch reads KVAAPAAVKS. Ser248 and Ser311 each carry phosphoserine. The tract at residues 327 to 347 is disordered; the sequence is DCEQSQDSNSDLRNDDSANDR. The span at 336–345 shows a compositional bias: basic and acidic residues; sequence SDLRNDDSAN.

Belongs to the FAM110 family.

The protein localises to the cytoplasm. The protein resides in the cytoskeleton. It localises to the microtubule organizing center. Its subcellular location is the centrosome. This Bos taurus (Bovine) protein is Protein FAM110B (FAM110B).